Reading from the N-terminus, the 257-residue chain is uncharacterized protein (257 aa).

Residues isoleucine 6 to phenylalanine 26 traverse the membrane as a helical segment.

This sequence belongs to the staphylococcal tandem lipoprotein family.

It localises to the cell membrane. This is an uncharacterized protein from Staphylococcus aureus (strain NCTC 8325 / PS 47).